The sequence spans 312 residues: Pollen allergen Phl p 5.0101 (312 aa).

The first 25 residues, 1-25 (MAVHQYTVALFLAVALVAGPAASYA), serve as a signal peptide directing secretion.

The protein belongs to the Poa p IX/Phl p VI allergen family.

The protein resides in the secreted. The chain is Pollen allergen Phl p 5.0101 from Phleum pratense (Common timothy).